The following is a 464-amino-acid chain: ATP synthase subunit beta (464 aa).

Position 152-159 (152-159) interacts with ATP; sequence GGAGVGKT.

The protein belongs to the ATPase alpha/beta chains family. As to quaternary structure, F-type ATPases have 2 components, CF(1) - the catalytic core - and CF(0) - the membrane proton channel. CF(1) has five subunits: alpha(3), beta(3), gamma(1), delta(1), epsilon(1). CF(0) has three main subunits: a(1), b(2) and c(9-12). The alpha and beta chains form an alternating ring which encloses part of the gamma chain. CF(1) is attached to CF(0) by a central stalk formed by the gamma and epsilon chains, while a peripheral stalk is formed by the delta and b chains.

Its subcellular location is the cell inner membrane. It carries out the reaction ATP + H2O + 4 H(+)(in) = ADP + phosphate + 5 H(+)(out). In terms of biological role, produces ATP from ADP in the presence of a proton gradient across the membrane. The catalytic sites are hosted primarily by the beta subunits. In Aliarcobacter butzleri (strain RM4018) (Arcobacter butzleri), this protein is ATP synthase subunit beta.